A 355-amino-acid chain; its full sequence is Neutral protease 2 homolog AFUB_100460 (355 aa).

Residues 1 to 19 form the signal peptide; that stretch reads MKITALASAILAVAQGALA. Positions 20 to 172 are excised as a propeptide; it reads LPARAPALDI…PASIKPLDRR (153 aa). Cystine bridges form between Cys179–Cys251 and Cys258–Cys276. His300 contacts Zn(2+). The active site involves Glu301. Residues His304 and Asp315 each contribute to the Zn(2+) site.

The protein belongs to the peptidase M35 family. The cofactor is Zn(2+).

Its subcellular location is the secreted. The enzyme catalyses Preferential cleavage of bonds with hydrophobic residues in P1'. Also 3-Asn-|-Gln-4 and 8-Gly-|-Ser-9 bonds in insulin B chain.. Secreted metalloproteinase that allows assimilation of proteinaceous substrates. Shows high activities on basic nuclear substrates such as histone and protamine. May be involved in virulence. The chain is Neutral protease 2 homolog AFUB_100460 from Aspergillus fumigatus (strain CBS 144.89 / FGSC A1163 / CEA10) (Neosartorya fumigata).